The following is a 196-amino-acid chain: Calmodulin-like protein 4 (196 aa).

The tract at residues 1–43 is disordered; it reads MAAEHLLPGPPPSLADFRLEAGGKGTERGSGSSKPTGSSRGPR. Over residues 17 to 27 the composition is skewed to basic and acidic residues; the sequence is FRLEAGGKGTE. The segment covering 29–39 has biased composition (polar residues); sequence GSGSSKPTGSS. EF-hand domains are found at residues 51 to 86, 87 to 122, 124 to 159, and 160 to 195; these read DQINEYKECFSLYDKQQRGKIKATDLMVAMRCLGAS, PTPGEVQRHLQTHGIDGNGELDFSTFLTIMHMQIKQ, DPKKEILLAMLMVDKEKKGYVMASDLRSKLTSLGEK, and LTHKEVDDLFREADIEPNGKVKYDEFIHKITLPGRD.

The protein belongs to the calmodulin family. Interacts with MYO7B; the interaction mediates the association of CALML4 with the IMAC/intermicrovillar adhesion complex. Interacts with MYO7A. In terms of tissue distribution, expressed in the intestinal tract. As to expression, dominant transcript in the intestinal tract.

It is found in the cell projection. The protein localises to the microvillus. In terms of biological role, as part of the intermicrovillar adhesion complex/IMAC plays a role in epithelial brush border differentiation, controlling microvilli organization and length. Acts as a light chain for MYO7B and is required for efficient targeting of the IMAC to the tips of border brush microvilli. This Homo sapiens (Human) protein is Calmodulin-like protein 4.